The primary structure comprises 302 residues: MQDLSAKQQYNNNKLQKRLRRHIGQAIADFNMIEEGDRVMVCLSGGKDSFAMLDILRNLQASAPINFDIVAVNLDQKQPGFPPEVLPQYLDSIGVEYKIVEEDTYSIVKEKIPEGKTTCSLCSRLRRGILYRTASELGATKIALGHHRDDILETLMLNMFYAGKLKAMPPKLVSDDGKHVVIRPLAYCHEKDLIRYAEWKEFPIIPCNLCGSQENLQRKAMKEMLNEWDRRFPGRIETMFNAIQNITPSHLMDHKLFDFKSINSSSGVIDGGDIAFDKPDIPAVPQLMVIEPDDRVEIIELN.

The PP-loop motif signature appears at 44–49; the sequence is SGGKDS. Positions 119, 122, and 210 each coordinate [4Fe-4S] cluster.

This sequence belongs to the TtcA family. Homodimer. Requires Mg(2+) as cofactor. It depends on [4Fe-4S] cluster as a cofactor.

Its subcellular location is the cytoplasm. The enzyme catalyses cytidine(32) in tRNA + S-sulfanyl-L-cysteinyl-[cysteine desulfurase] + AH2 + ATP = 2-thiocytidine(32) in tRNA + L-cysteinyl-[cysteine desulfurase] + A + AMP + diphosphate + H(+). It functions in the pathway tRNA modification. Its function is as follows. Catalyzes the ATP-dependent 2-thiolation of cytidine in position 32 of tRNA, to form 2-thiocytidine (s(2)C32). The sulfur atoms are provided by the cysteine/cysteine desulfurase (IscS) system. The polypeptide is tRNA-cytidine(32) 2-sulfurtransferase (Tolumonas auensis (strain DSM 9187 / NBRC 110442 / TA 4)).